A 259-amino-acid chain; its full sequence is Protein N-terminal and lysine N-methyltransferase efm7 (259 aa).

S-adenosyl-L-methionine-binding positions include W56, 83-85 (GAA), D105, W139, and A163.

The protein belongs to the class I-like SAM-binding methyltransferase superfamily. EFM7 family.

It localises to the cytoplasm. Its function is as follows. S-adenosyl-L-methionine-dependent protein methyltransferase that trimethylates the N-terminal glycine 'Gly-2' of elongation factor 1-alpha, before also catalyzing the mono- and dimethylation of 'Lys-3'. The chain is Protein N-terminal and lysine N-methyltransferase efm7 from Aspergillus fumigatus (strain ATCC MYA-4609 / CBS 101355 / FGSC A1100 / Af293) (Neosartorya fumigata).